We begin with the raw amino-acid sequence, 391 residues long: MESLKEMRKAQMSEGPAAILAIGTANPDNVYMQADYPDYYFKMTKSEHMTELKDKFRTLCEKSMIRKRHMCFSEEFLKANPEVCKHMGKSLNARQDIAVVETPRLGNEAAVKAIKEWGQPKSSITHLIFCSSAGVDMPGADYQLTRILGLNPSVKRMMIYQQGCYAGGTVLRLAKDLAENNKGSRVLVVCSELTAPTFRGPSPDAVDSLVGQALFADGAAALVVGADPDSSIERALYYLVSASQMLLPDSDGAIEGHIREEGLTVHLKKDVPALFSGNIDTPLVEAFKPLGISDWNSIFWIAHPGGPAILDQIEEKLGLKEDKLRASKHVMSEYGNMSSSCVLFVLDEMRSRSLQDGKSTTGEGLDWGVLFGFGPGLTVETIVLRSVPIEA.

Residue Cys-164 is part of the active site.

This sequence belongs to the thiolase-like superfamily. Chalcone/stilbene synthases family.

The catalysed reaction is N-methylanthraniloyl-CoA + 3 malonyl-CoA + 3 H(+) = 1,3-dihydroxy-N-methylacridone + 3 CO2 + 4 CoA + H2O. The sequence is that of Probable acridone synthase 3 (ACS3) from Ruta graveolens (Common rue).